The sequence spans 492 residues: Ketol-acid reductoisomerase (NADP(+)) (492 aa).

In terms of domain architecture, KARI N-terminal Rossmann spans 15–208 (AQLGQCRFMD…GGDRAGVLQS (194 aa)). NADP(+) contacts are provided by residues 45-48 (CGAQ), Arg-68, Arg-76, Ser-78, and 108-110 (DKQ). The active site involves His-132. NADP(+) is bound at residue Gly-158. 2 consecutive KARI C-terminal knotted domains span residues 209–353 (SFIA…DEQT) and 354–486 (YFDK…MTDM). 4 residues coordinate Mg(2+): Asp-217, Glu-221, Glu-389, and Glu-393. A substrate-binding site is contributed by Ser-414.

It belongs to the ketol-acid reductoisomerase family. The cofactor is Mg(2+).

The catalysed reaction is (2R)-2,3-dihydroxy-3-methylbutanoate + NADP(+) = (2S)-2-acetolactate + NADPH + H(+). It catalyses the reaction (2R,3R)-2,3-dihydroxy-3-methylpentanoate + NADP(+) = (S)-2-ethyl-2-hydroxy-3-oxobutanoate + NADPH + H(+). Its pathway is amino-acid biosynthesis; L-isoleucine biosynthesis; L-isoleucine from 2-oxobutanoate: step 2/4. The protein operates within amino-acid biosynthesis; L-valine biosynthesis; L-valine from pyruvate: step 2/4. Involved in the biosynthesis of branched-chain amino acids (BCAA). Catalyzes an alkyl-migration followed by a ketol-acid reduction of (S)-2-acetolactate (S2AL) to yield (R)-2,3-dihydroxy-isovalerate. In the isomerase reaction, S2AL is rearranged via a Mg-dependent methyl migration to produce 3-hydroxy-3-methyl-2-ketobutyrate (HMKB). In the reductase reaction, this 2-ketoacid undergoes a metal-dependent reduction by NADPH to yield (R)-2,3-dihydroxy-isovalerate. The protein is Ketol-acid reductoisomerase (NADP(+)) of Shewanella oneidensis (strain ATCC 700550 / JCM 31522 / CIP 106686 / LMG 19005 / NCIMB 14063 / MR-1).